Here is a 676-residue protein sequence, read N- to C-terminus: Probable metal-nicotianamine transporter YSL6 (676 aa).

The next 13 membrane-spanning stretches (helical) occupy residues 38-58 (ITIRGLTVSALLGTLFCIITH), 62-82 (LTVGIIPSLNVAAGLLGFFFV), 110-130 (CVVACYGLAFSGGFGSYLIAM), 154-174 (GLWWMIGFLFVVSFLGLFSLV), 276-296 (IVNCSVLLGAIISWGILWPFV), 321-341 (VFIAIAIILGDGLYNLVKIIA), 392-412 (FAIAGYVGLAAISTATIPIIF), 413-433 (PPLKWYFVLCSYFIAPALAFC), 452-472 (IGLFIIASVVGSDGGVIAGLA), 510-530 (VGTAMGCVIAPLTFWLFWTAF), 561-581 (LPKHCLALCYGFFIAALIVNL), 604-624 (FYIGAYFAIDMFVGTVILFVW), and 639-659 (VASGLICGDGIWTIPSAILSI).

It belongs to the YSL (TC 2.A.67.2) family.

It is found in the membrane. Its function is as follows. May be involved in the transport of nicotianamine-chelated metals. This chain is Probable metal-nicotianamine transporter YSL6 (YSL6), found in Arabidopsis thaliana (Mouse-ear cress).